An 89-amino-acid chain; its full sequence is Elongation factor 1-beta (89 aa).

The protein belongs to the EF-1-beta/EF-1-delta family.

Functionally, promotes the exchange of GDP for GTP in EF-1-alpha/GDP, thus allowing the regeneration of EF-1-alpha/GTP that could then be used to form the ternary complex EF-1-alpha/GTP/AAtRNA. The polypeptide is Elongation factor 1-beta (Methanococcus maripaludis (strain DSM 14266 / JCM 13030 / NBRC 101832 / S2 / LL)).